We begin with the raw amino-acid sequence, 394 residues long: Elongation factor Tu, mitochondrial (394 aa).

In terms of domain architecture, tr-type G spans 10–204 (KPHCNIGTIG…AVDNYIPQPE (195 aa)). Positions 19 to 26 (GHVDHGKT) are G1. 19–26 (GHVDHGKT) lines the GTP pocket. Positions 60–64 (GITIS) are G2. The G3 stretch occupies residues 81 to 84 (DCPG). Residues 81 to 85 (DCPGH) and 136 to 139 (NKVD) each bind GTP. The segment at 136 to 139 (NKVD) is G4. Residues 174–176 (SAL) form a G5 region.

This sequence belongs to the TRAFAC class translation factor GTPase superfamily. Classic translation factor GTPase family. EF-Tu/EF-1A subfamily.

The protein resides in the mitochondrion. This protein promotes the GTP-dependent binding of aminoacyl-tRNA to the A-site of ribosomes during protein biosynthesis. This Reclinomonas americana protein is Elongation factor Tu, mitochondrial (TUFA).